The chain runs to 307 residues: Putative oxidoreductase YceM (307 aa).

This sequence belongs to the Gfo/Idh/MocA family.

This chain is Putative oxidoreductase YceM (yceM), found in Escherichia coli (strain K12).